The sequence spans 441 residues: Ribulose bisphosphate carboxylase large chain (441 aa).

Asparagine 89 and threonine 139 together coordinate substrate. The Proton acceptor role is filled by lysine 141. Residue lysine 143 coordinates substrate. Mg(2+)-binding residues include lysine 167, aspartate 169, and glutamate 170. Lysine 167 is subject to N6-carboxylysine. The Proton acceptor role is filled by histidine 260. Residues residue 261, histidine 293, and serine 345 each coordinate substrate.

Belongs to the RuBisCO large chain family. Type I subfamily. Heterohexadecamer of 8 large chains and 8 small chains; disulfide-linked. The disulfide link is formed within the large subunit homodimers. Requires Mg(2+) as cofactor. The disulfide bond which can form in the large chain dimeric partners within the hexadecamer appears to be associated with oxidative stress and protein turnover.

The protein resides in the plastid. Its subcellular location is the chloroplast. The catalysed reaction is 2 (2R)-3-phosphoglycerate + 2 H(+) = D-ribulose 1,5-bisphosphate + CO2 + H2O. It catalyses the reaction D-ribulose 1,5-bisphosphate + O2 = 2-phosphoglycolate + (2R)-3-phosphoglycerate + 2 H(+). Functionally, ruBisCO catalyzes two reactions: the carboxylation of D-ribulose 1,5-bisphosphate, the primary event in carbon dioxide fixation, as well as the oxidative fragmentation of the pentose substrate in the photorespiration process. Both reactions occur simultaneously and in competition at the same active site. The chain is Ribulose bisphosphate carboxylase large chain from Apocynum cannabinum (Hemp dogbane).